The primary structure comprises 273 residues: Cysteine protease S273R (273 aa).

Residues histidine 168 and asparagine 187 contribute to the active site. Glutamine 226 lines the substrate pocket. Cysteine 232 functions as the Nucleophile in the catalytic mechanism.

It belongs to the peptidase C63 family.

It localises to the host cytoplasm. Its subcellular location is the virion. Its function is as follows. Cysteine protease that plays several role during infection including processing of the structural polyprotein or inhibition of the host immune response. Catalyzes the maturation of the pp220 and pp62 polyprotein precursors into core-shell proteins. Plays a role in the disruption of host pyroptosis via specific cleavage of gasdermin D/GSDMD. In addition, strongly decreases the host cGAS-STING signaling by targeting IKBKE via its enzymatic activity. Also impairs host FOXJ1-mediated antiviral effect via degradation of FOXJ1. Cleaves host G3BP1 inducing loss of stress granules formation. Interacts with and induces the degradation of host STAT2 via polyubiquitination of the latter. This Ornithodoros (relapsing fever ticks) protein is Cysteine protease S273R.